The sequence spans 1009 residues: Translation initiation factor IF-2 (1009 aa).

The segment at 1–415 (MSDENENGRP…EREKEKRRGG (415 aa)) is disordered. A compositionally biased stretch (basic and acidic residues) spans 94–110 (EELRARQRVVDAAREAQ). Over residues 111–121 (ARQVAEQAAAE) the composition is skewed to low complexity. Over residues 122 to 136 (ARARAAQEAAQREAA) the composition is skewed to basic and acidic residues. Residues 137-146 (AKAAAERAAA) show a composition bias toward low complexity. The segment covering 147-174 (APPPVAQAPAAPAPAAPVTPPPAAPQAP) has biased composition (pro residues). The span at 175 to 189 (RPVAQAPVAPSAPRQ) shows a compositional bias: low complexity. Composition is skewed to basic and acidic residues over residues 208–218 (EPSRDRRDDRP) and 251–287 (PRPEGDRPRGPRPDGDRPQGDRGGYRGDRPQGDRPQG). The span at 311-320 (GGPPRGPRPG) shows a compositional bias: pro residues. Composition is skewed to basic and acidic residues over residues 346 to 358 (MDRRPDEDDDRRK) and 403 to 415 (RAREREKEKRRGG). One can recognise a tr-type G domain in the interval 505–675 (LRPPVVTIMG…LLQAEVLDLK (171 aa)). Residues 514–521 (GHVDHGKT) are G1. 514–521 (GHVDHGKT) contributes to the GTP binding site. The tract at residues 539–543 (GITQH) is G2. Residues 561-564 (DTPG) form a G3 region. GTP contacts are provided by residues 561-565 (DTPGH) and 615-618 (NKMD). The segment at 615–618 (NKMD) is G4. The tract at residues 651–653 (SAK) is G5.

The protein belongs to the TRAFAC class translation factor GTPase superfamily. Classic translation factor GTPase family. IF-2 subfamily.

It is found in the cytoplasm. Its function is as follows. One of the essential components for the initiation of protein synthesis. Protects formylmethionyl-tRNA from spontaneous hydrolysis and promotes its binding to the 30S ribosomal subunits. Also involved in the hydrolysis of GTP during the formation of the 70S ribosomal complex. The sequence is that of Translation initiation factor IF-2 from Caulobacter vibrioides (strain ATCC 19089 / CIP 103742 / CB 15) (Caulobacter crescentus).